The chain runs to 201 residues: Imidazole glycerol phosphate synthase subunit HisH 1 (201 aa).

Residues Met1–Leu201 form the Glutamine amidotransferase type-1 domain. Cys80 acts as the Nucleophile in catalysis. Active-site residues include His183 and Glu185.

As to quaternary structure, heterodimer of HisH and HisF.

Its subcellular location is the cytoplasm. It carries out the reaction 5-[(5-phospho-1-deoxy-D-ribulos-1-ylimino)methylamino]-1-(5-phospho-beta-D-ribosyl)imidazole-4-carboxamide + L-glutamine = D-erythro-1-(imidazol-4-yl)glycerol 3-phosphate + 5-amino-1-(5-phospho-beta-D-ribosyl)imidazole-4-carboxamide + L-glutamate + H(+). The catalysed reaction is L-glutamine + H2O = L-glutamate + NH4(+). The protein operates within amino-acid biosynthesis; L-histidine biosynthesis; L-histidine from 5-phospho-alpha-D-ribose 1-diphosphate: step 5/9. Its function is as follows. IGPS catalyzes the conversion of PRFAR and glutamine to IGP, AICAR and glutamate. The HisH subunit provides the glutamine amidotransferase activity that produces the ammonia necessary to HisF for the synthesis of IGP and AICAR. This Campylobacter jejuni subsp. jejuni serotype O:23/36 (strain 81-176) protein is Imidazole glycerol phosphate synthase subunit HisH 1 (hisH1).